Consider the following 540-residue polypeptide: Zinc transporter ZIP5 (540 aa).

The N-terminal stretch at 1–20 is a signal peptide; sequence MMGSPVSHLLAGFCVWVVLG. Residues 21–212 are Extracellular-facing; that stretch reads WVGGSVPNLG…PAPPGDLLSA (192 aa). Asn-50 carries N-linked (GlcNAc...) asparagine glycosylation. Positions 78 to 101 are disordered; it reads HGPLTGRAASPAADNSTHRPQNPE. The span at 90–101 shows a compositional bias: polar residues; that stretch reads ADNSTHRPQNPE. Asn-160 is a glycosylation site (N-linked (GlcNAc...) asparagine). The chain crosses the membrane as a helical span at residues 213 to 233; sequence LLQSALAVLLLSLPSPLSLLL. The Cytoplasmic portion of the chain corresponds to 234 to 244; sequence LRLLGPRLLRP. A helical transmembrane segment spans residues 245–265; that stretch reads LLGFLGALAVGTLCGDALLHL. Topologically, residues 266 to 287 are extracellular; it reads LPHAQEGRHAGPGGLPEKDLGP. Residues 288–308 form a helical membrane-spanning segment; sequence GLSVLGGLFLLFVLENMLGLL. The Cytoplasmic portion of the chain corresponds to 309 to 444; sequence RHRGLRPRCC…LLQSGLSFRR (136 aa). A disordered region spans residues 324–377; that stretch reads NLETRNLDPENGSGMALQPLQAAPEPGAQGQREKNSQHPPALAPPGHQGHSHGH. Position 336 is a phosphoserine (Ser-336). His-375 bears the Pros-methylhistidine mark. The chain crosses the membrane as a helical span at residues 445-465; that stretch reads LLLLSLVSGALGLGGAVLGVG. The Extracellular portion of the chain corresponds to 466 to 470; that stretch reads LSLGP. Residues 471-491 traverse the membrane as a helical segment; that stretch reads VPLTPWVFGVTAGVFLYVALV. Residues 492–508 are Cytoplasmic-facing; that stretch reads DMLPALLRPPEPLPTPH. Residues 509 to 529 form a helical membrane-spanning segment; that stretch reads VLLQGLGLLLGGGLMLAITLL. The Extracellular portion of the chain corresponds to 530–540; it reads EERLLPVTTEG.

The protein belongs to the ZIP transporter (TC 2.A.5) family. In terms of assembly, homodimer. Post-translationally, methylated at His-375 by METTL9. In terms of processing, N-Glycosylated. In terms of tissue distribution, expressed in liver, kidney, pancreas, small intestine, colon, spleen, fetal liver and fetal kidney.

It localises to the basolateral cell membrane. It carries out the reaction Zn(2+)(in) = Zn(2+)(out). Uniporter that transports zinc(2+) into polarized cells of enterocytes, pancreatic acinar and endoderm cells across the basolateral membrane and participates, notably, in zinc excretion from the intestine by the uptake of zinc from the blood into the intestine. The transport mechanism is temperature- and concentration-dependent and saturable. In addition, is also a high affinity copper transporter in vitro. Also may regulate glucose-stimulated insulin secretion (GSIS) in islets primarily through the zinc-activated SIRT1-PPARGC1A axis. Could regulate the BMP/TGF-beta (bone morphogenetic protein/transforming growth factor-beta) signaling pathway and modulates extracellular matrix (ECM) proteins of the sclera. Plays a role in eye development. The protein is Zinc transporter ZIP5 of Homo sapiens (Human).